The primary structure comprises 284 residues: Para-Rep C3 (284 aa).

Residues Thr-3 to Tyr-98 form the CRESS-DNA virus Rep endonuclease domain. The short motif at Val-10 to Leu-13 is the RCR-1 element. Residues Glu-36 and His-42 each coordinate a divalent metal cation. The short motif at His-42–Gln-44 is the RCR-2 element. A Nuclear localization signal motif is present at residues Ala-51–Arg-71. Tyr-81 acts as the For DNA cleavage activity in catalysis. The RCR-3 signature appears at Tyr-81–Lys-84. A divalent metal cation is bound at residue Asp-86. Residues Tyr-98 to His-104 carry the Nuclear localization signal motif. Gly-174–Ser-182 serves as a coordination point for ATP.

The protein belongs to the nanoviridea/circoviridae replication-associated protein family. Homooligomer (Potential). Rep binds to repeated DNA motifs (iterons). Requires Mg(2+) as cofactor. The cofactor is Mn(2+).

The protein localises to the host nucleus. It carries out the reaction ATP + H2O = ADP + phosphate + H(+). Functionally, initiates and terminates the replication only of its own subviral DNA molecule. The closed circular ssDNA genome is first converted to a superhelical dsDNA. Rep binds a specific hairpin at the genome origin of replication. Introduces an endonucleolytic nick within the intergenic region of the genome, thereby initiating the rolling circle replication (RCR). Following cleavage, binds covalently to the 5'-phosphate of DNA as a tyrosyl ester. The cleavage gives rise to a free 3'-OH that serves as a primer for the cellular DNA polymerase. The polymerase synthesizes the (+) strand DNA by rolling circle mechanism. After one round of replication, a Rep-catalyzed nucleotidyl transfer reaction releases a circular single-stranded virus genome, thereby terminating the replication. Displays origin-specific DNA cleavage, nucleotidyl transferase, ATPase and helicase activities. The sequence is that of Para-Rep C3 (C3) from Milk vetch dwarf C3 alphasatellite (MVDC3A).